Here is a 161-residue protein sequence, read N- to C-terminus: Probable cell wall elongation regulator TseB (161 aa).

At 1–5 the chain is on the cytoplasmic side; it reads MRKKA. The chain crosses the membrane as a helical span at residues 6-26; the sequence is LIFTVIFGIIFLAVLLVSASI. Residues 27–161 are Extracellular-facing; sequence YKSAMAQKEE…TGKILKNITP (135 aa).

In terms of assembly, interacts with the penicillin-binding protein PBP2A, a monofunctional transpeptidase.

Its subcellular location is the cell membrane. Required for normal cell shape. Plays an important role in cell wall elongation during exponential phase and spore outgrowth. Probably regulates the activity of the penicillin-binding protein PBP2A through a direct interaction. Not required for PBP2A activity, stability and localization. The polypeptide is Probable cell wall elongation regulator TseB (Bacillus subtilis (strain 168)).